The chain runs to 284 residues: Tropomyosin alpha-3 chain (284 aa).

Residue M1 is modified to N-acetylmethionine. Residues 1–43 (MEAIKKKMQMLKLDKENALDRAEQAEAEQKQAEERSKQLEDEL) are disordered. Residues 1 to 284 (MEAIKKKMQM…DHALNDMTSI (284 aa)) are a coiled coil. The residue at position 2 (E2) is an N-acetylalanine. The span at 12 to 40 (KLDKENALDRAEQAEAEQKQAEERSKQLE) shows a compositional bias: basic and acidic residues. A Phosphothreonine modification is found at T53. Phosphoserine is present on residues S61 and S87. Position 108 is a phosphothreonine (T108). Phosphoserine is present on residues S206 and S215. At L228 the chain carries N6-acetyllysine. At T252 the chain carries Phosphothreonine. A Phosphotyrosine modification is found at Y261. Position 271 is a phosphoserine (S271). T282 is subject to Phosphothreonine. Position 283 is a phosphoserine (S283).

Belongs to the tropomyosin family. As to quaternary structure, homodimer. Heterodimer of an alpha (TPM1, TPM3 or TPM4) and a beta (TPM2) chain. Interacts with TMOD1. Interacts with TNNT1.

It is found in the cytoplasm. The protein localises to the cytoskeleton. In terms of biological role, binds to actin filaments in muscle and non-muscle cells. Plays a central role, in association with the troponin complex, in the calcium dependent regulation of vertebrate striated muscle contraction. Smooth muscle contraction is regulated by interaction with caldesmon. In non-muscle cells is implicated in stabilizing cytoskeleton actin filaments. This chain is Tropomyosin alpha-3 chain (TPM3), found in Bos taurus (Bovine).